A 375-amino-acid polypeptide reads, in one-letter code: Actin (375 aa).

This sequence belongs to the actin family.

Its subcellular location is the cytoplasm. The protein resides in the cytoskeleton. It carries out the reaction ATP + H2O = ADP + phosphate + H(+). Its function is as follows. Actins are highly conserved proteins that are involved in various types of cell motility and are ubiquitously expressed in all eukaryotic cells. The chain is Actin from Sterkiella cavicola (Ciliate).